The following is a 411-amino-acid chain: Na(+)-translocating NADH-quinone reductase subunit F (411 aa).

The helical transmembrane segment at 6 to 26 threads the bilayer; that stretch reads AIGGVAMFTLIIMSFVAIILA. The 2Fe-2S ferredoxin-type domain occupies 35–129; sequence GDVTIHINDN…DMKIEIDPEF (95 aa). C72, C78, C81, and C113 together coordinate [2Fe-2S] cluster. The FAD-binding FR-type domain occupies 132–273; that stretch reads VQKWECEVIS…SGPYGEFFAK (142 aa).

This sequence belongs to the NqrF family. Composed of six subunits; NqrA, NqrB, NqrC, NqrD, NqrE and NqrF. [2Fe-2S] cluster is required as a cofactor. FAD serves as cofactor.

The protein resides in the cell inner membrane. It catalyses the reaction a ubiquinone + n Na(+)(in) + NADH + H(+) = a ubiquinol + n Na(+)(out) + NAD(+). Functionally, NQR complex catalyzes the reduction of ubiquinone-1 to ubiquinol by two successive reactions, coupled with the transport of Na(+) ions from the cytoplasm to the periplasm. The first step is catalyzed by NqrF, which accepts electrons from NADH and reduces ubiquinone-1 to ubisemiquinone by a one-electron transfer pathway. This chain is Na(+)-translocating NADH-quinone reductase subunit F, found in Psychrobacter arcticus (strain DSM 17307 / VKM B-2377 / 273-4).